The primary structure comprises 838 residues: Translation initiation factor IF-2 (838 aa).

Disordered regions lie at residues 30 to 60 and 94 to 254; these read PHTAAEEHVSDSEKQSLLTHLKSSHKAKVEE and QRSP…PTGP. Composition is skewed to basic and acidic residues over residues 33–43 and 96–136; these read AAEEHVSDSEK and SPEE…EARR. A compositionally biased stretch (low complexity) spans 137–173; the sequence is QPAPVAEPVAAQAAAPAPAPVVEPVQEAPVATAAPAA. Basic and acidic residues-rich tracts occupy residues 174–214 and 222–231; these read DARK…EKAP and TTDEESDGFR. Residues 232–245 show a composition bias toward basic residues; that stretch reads RGGRGKAKLKKRNA. Residues 338–507 form the tr-type G domain; that stretch reads ARAPVVTVMG…LLQAEVLELK (170 aa). Residues 347–354 are G1; sequence GHVDHGKT. 347 to 354 provides a ligand contact to GTP; that stretch reads GHVDHGKT. A G2 region spans residues 372–376; sequence GITQH. Residues 393 to 396 form a G3 region; the sequence is DTPG. GTP contacts are provided by residues 393–397 and 447–450; these read DTPGH and NKID. The interval 447–450 is G4; it reads NKID. The segment at 483 to 485 is G5; sequence SAK.

This sequence belongs to the TRAFAC class translation factor GTPase superfamily. Classic translation factor GTPase family. IF-2 subfamily.

It localises to the cytoplasm. Its function is as follows. One of the essential components for the initiation of protein synthesis. Protects formylmethionyl-tRNA from spontaneous hydrolysis and promotes its binding to the 30S ribosomal subunits. Also involved in the hydrolysis of GTP during the formation of the 70S ribosomal complex. The chain is Translation initiation factor IF-2 from Pseudomonas fluorescens (strain ATCC BAA-477 / NRRL B-23932 / Pf-5).